Reading from the N-terminus, the 119-residue chain is Large ribosomal subunit protein bL20 (119 aa).

This sequence belongs to the bacterial ribosomal protein bL20 family.

In terms of biological role, binds directly to 23S ribosomal RNA and is necessary for the in vitro assembly process of the 50S ribosomal subunit. It is not involved in the protein synthesizing functions of that subunit. This Shewanella amazonensis (strain ATCC BAA-1098 / SB2B) protein is Large ribosomal subunit protein bL20.